The sequence spans 225 residues: Protein GrpE (225 aa).

Disordered stretches follow at residues 1 to 44 and 183 to 225; these read MTEE…ENAG and VAVA…PDEG.

This sequence belongs to the GrpE family. In terms of assembly, homodimer.

It is found in the cytoplasm. Participates actively in the response to hyperosmotic and heat shock by preventing the aggregation of stress-denatured proteins, in association with DnaK and GrpE. It is the nucleotide exchange factor for DnaK and may function as a thermosensor. Unfolded proteins bind initially to DnaJ; upon interaction with the DnaJ-bound protein, DnaK hydrolyzes its bound ATP, resulting in the formation of a stable complex. GrpE releases ADP from DnaK; ATP binding to DnaK triggers the release of the substrate protein, thus completing the reaction cycle. Several rounds of ATP-dependent interactions between DnaJ, DnaK and GrpE are required for fully efficient folding. The sequence is that of Protein GrpE from Streptomyces coelicolor (strain ATCC BAA-471 / A3(2) / M145).